The following is a 179-amino-acid chain: Translation initiation factor IF-3 (179 aa).

Belongs to the IF-3 family. Monomer.

It is found in the cytoplasm. IF-3 binds to the 30S ribosomal subunit and shifts the equilibrium between 70S ribosomes and their 50S and 30S subunits in favor of the free subunits, thus enhancing the availability of 30S subunits on which protein synthesis initiation begins. The polypeptide is Translation initiation factor IF-3 (Leptospira interrogans serogroup Icterohaemorrhagiae serovar copenhageni (strain Fiocruz L1-130)).